Reading from the N-terminus, the 1507-residue chain is DE-cadherin (1507 aa).

A signal peptide spans 1 to 69 (MSTSVQRMSR…AISLLSPALA (69 aa)). Residues 70 to 261 (LHSPPDKNFS…IYLKRPIDKR (192 aa)) constitute a propeptide that is removed on maturation. 7 Cadherin domains span residues 97–195 (VKEE…APAF), 204–301 (MSEN…PPSF), 311–412 (LKEN…IPYY), 420–522 (ILEN…KPHF), 532–633 (LLED…TILE), 631–733 (ILEE…APFL), and 741–835 (WQEN…NDNA). Over 262 to 1328 (PGQSYAIIVR…VAFSFGIDRN (1067 aa)) the chain is Extracellular. Asn317, Asn466, and Asn552 each carry an N-linked (GlcNAc...) asparagine glycan. N-linked (GlcNAc...) asparagine glycans are attached at residues Asn766, Asn949, Asn983, Asn999, and Asn1073. An EGF-like domain is found at 1084–1123 (VQAQCVCEAPLMRRCLNGGSPRYGENDVCDCIDGFTGPHC). 2 disulfides stabilise this stretch: Cys1098/Cys1112 and Cys1114/Cys1123. The region spanning 1125 to 1313 (LVSVAFYGSG…SVFRNIDSGC (189 aa)) is the Laminin G-like domain. N-linked (GlcNAc...) asparagine glycosylation is found at Asn1145, Asn1274, and Asn1290. Cys1287 and Cys1313 are joined by a disulfide. The helical transmembrane segment at 1329 to 1349 (FIIAIIVCLALLLIILLAVVV) threads the bilayer. Over 1350–1507 (QKKQKNGWHE…NVDDDQGWRI (158 aa)) the chain is Cytoplasmic. Residues 1350-1507 (QKKQKNGWHE…NVDDDQGWRI (158 aa)) form an interaction with Inx2 region. The interval 1488 to 1507 (YGEEPSDTDSNVDDDQGWRI) is disordered. Phosphoserine is present on Ser1493.

In terms of assembly, interacts (via cytoplasmic region) with Inx2 (via cytoplasmic loop). Interacts with Hakai. Interacts with Myo31DF. N-glycosylation is important for biosynthesis and function. In terms of tissue distribution, in early stage 9 and stage 10 oocytes, expressed in border cells, strongly expressed in polar cells and very weakly expressed in the nurse cells (at protein level). In the embryo, expressed in the leading edge cells of the dorsal epidermis (at protein level). Stage 10 embryos exhibit intense expression in epithelial cells. Stage 14 embryos show expression in the hindgut (at the apical poles of cell-cell boundaries), at the apical junctions of tracheal cells and in the dorsal longitudinal trunk. In stage 16 embryos the glial midline cells of the central nervous system show strong expression.

The protein localises to the cell membrane. Its subcellular location is the apical cell membrane. Its function is as follows. Cadherins are calcium-dependent cell adhesion proteins. In connecting cells they preferentially interact with themselves in a homophilic manner; cadherins may thus contribute to the sorting of heterogeneous cell types. During oogenesis, integral component of the guidance mechanisms that regulate the directional persistent collective migration of the border cell (BC) cluster through the nurse cells to the oocyte. Functions downstream of the two chemoattractant receptors, Pvr and Egfr, to promote BC adhesion between the leader cells of the migrating cluster and the surrounding nurse cells. This adhesion increases Rac1 signaling in the leading cells, which in turn stabilizes DE-cadherin/DE-cadherin adhesions through the formation of forward-directed protrusions which attach/detach to the surrounding nurse cells in order to pull the cluster through the egg chamber to the oocyte. Within the BC cluster, also promotes adhesion between BCs, and between BCs and polar cells which enables the lead BC to communicate direction to the other cells in the cluster, providing polarity to each individual cell and ensuring collective behavior. May function in cell intercalation in the lateral epidermis during germband extension. Contributes to the determination of body left-right asymmetry by enhancing Myo31DF activity and inhibiting Myo61F activity. This chain is DE-cadherin, found in Drosophila melanogaster (Fruit fly).